A 310-amino-acid polypeptide reads, in one-letter code: Probable cell division protein WhiA (310 aa).

Positions 274–308 (SLKELGTLVPGGPISKSGINHRLRKINQFAEQLQK) form a DNA-binding region, H-T-H motif.

Belongs to the WhiA family.

Involved in cell division and chromosome segregation. The chain is Probable cell division protein WhiA from Lactiplantibacillus plantarum (strain ATCC BAA-793 / NCIMB 8826 / WCFS1) (Lactobacillus plantarum).